Here is a 493-residue protein sequence, read N- to C-terminus: Angiopoietin-related protein 2 (493 aa).

An N-terminal signal peptide occupies residues 1–19 (MRPLCMTYWWLGLLATVGA). Coiled coils occupy residues 77–115 (EVHL…VDGG) and 152–202 (ALEL…QLEE). Asn164 and Asn192 each carry an N-linked (GlcNAc...) asparagine glycan. The Fibrinogen C-terminal domain maps to 269–489 (DKPSGPWRDC…KVVMMIRPNP (221 aa)). Intrachain disulfides connect Cys278–Cys307 and Cys430–Cys443.

As to expression, widely expressed in heart, tongue, lung and skeletal muscle. Also found in lower levels in kidney, epididymis and testis.

It localises to the secreted. Functionally, induces sprouting in endothelial cells through an autocrine and paracrine action. This chain is Angiopoietin-related protein 2 (Angptl2), found in Mus musculus (Mouse).